A 464-amino-acid chain; its full sequence is MTEVKKGKINQILGPVVDVRFPSEWLPEINTALELNNHGSKLVLEVSQLVGDNIARCIAMDTTDGLVRGQEVINTEKPIMMPVGKQVLGRMFNVTGDPIDEQPAPTGKRMPIHRPAPSFAEQAEAIEILETGIKVVDLLVPFAKGGKIGLFGGAGVGKTVLMQELIHNIAKNHGGLSVFAGVGERTREGNDLYYEMAESDVLDKTALVFGQMNEPPGARMRVALSGLTMAEEFRDAFGQDVLLFIDNIFRFTQAGSEVSALLGRMPSAVGYQPTLAFEMGQLQERITSTKKGSITSVQAVYVPADDLTDPAPATTFSHLDAKVVLDRAIASLGLYPAISPLQSTSRLLDPLVVGVKHYSVARRVIEILQRFMELQDIIAILGMDELSEEDRQLVMRARKVRNYLSQPSHVAEKFSGQPGLSVKLEDTIEGFRKILDGECDDIHEQHFLYVGKIDDVFEKVAKSK.

152–159 (GGAGVGKT) is a binding site for ATP.

This sequence belongs to the ATPase alpha/beta chains family. F-type ATPases have 2 components, CF(1) - the catalytic core - and CF(0) - the membrane proton channel. CF(1) has five subunits: alpha(3), beta(3), gamma(1), delta(1), epsilon(1). CF(0) has three main subunits: a(1), b(2) and c(9-12). The alpha and beta chains form an alternating ring which encloses part of the gamma chain. CF(1) is attached to CF(0) by a central stalk formed by the gamma and epsilon chains, while a peripheral stalk is formed by the delta and b chains.

The protein localises to the cell membrane. It catalyses the reaction ATP + H2O + 4 H(+)(in) = ADP + phosphate + 5 H(+)(out). Its function is as follows. Produces ATP from ADP in the presence of a proton gradient across the membrane. The catalytic sites are hosted primarily by the beta subunits. The sequence is that of ATP synthase subunit beta from Ureaplasma urealyticum serovar 10 (strain ATCC 33699 / Western).